Reading from the N-terminus, the 292-residue chain is Rhodanese-like domain-containing protein 11, chloroplastic (292 aa).

The transit peptide at 1 to 56 (MESLSLPVLNPLLASGSNLFRNQHSRMTSSMVSSLKSPIGGTSLSTVRRFGVGVVR) directs the protein to the chloroplast. In terms of domain architecture, Rhodanese spans 101–224 (SLSNKPLLDV…AQDEDLVTEG (124 aa)). Cysteine 184 (cysteine persulfide intermediate) is an active-site residue.

Its subcellular location is the plastid. The protein resides in the chloroplast. The protein is Rhodanese-like domain-containing protein 11, chloroplastic (STR11) of Arabidopsis thaliana (Mouse-ear cress).